A 156-amino-acid polypeptide reads, in one-letter code: Small ribosomal subunit protein uS7 (156 aa).

It belongs to the universal ribosomal protein uS7 family. As to quaternary structure, part of the 30S ribosomal subunit. Contacts proteins S9 and S11.

Functionally, one of the primary rRNA binding proteins, it binds directly to 16S rRNA where it nucleates assembly of the head domain of the 30S subunit. Is located at the subunit interface close to the decoding center, probably blocks exit of the E-site tRNA. In Aeromonas salmonicida (strain A449), this protein is Small ribosomal subunit protein uS7.